Consider the following 282-residue polypeptide: MAYLAPISSSLSIFKNPQLSRFQFSSSSPNPLFLRPRIQILSMTMNKSPSLVVVAATTAAEKQKKRYPGESKGFVEEMRFVAMRLHTKDQAKEGEKETKSIEERPVAKWEPTVEGYLRFLVDSKLVYDTLELIIQDSNFPTYAEFKNTGLERAEKLSTDLEWFKEQGYEIPEPTAPGKTYSQYLKELAEKDPQAFICHFYNIYFAHSAGGRMIGRKVAERILDNKELEFYKWDGELSQLLQNVREKLNKVAEEWTREEKNHCLEETEKSFKYSGEILRLILS.

Residues 1-54 constitute a chloroplast transit peptide; the sequence is MAYLAPISSSLSIFKNPQLSRFQFSSSSPNPLFLRPRIQILSMTMNKSPSLVVV. H86 contacts heme b.

This sequence belongs to the heme oxygenase family. As to expression, widely expressed.

It is found in the plastid. The protein resides in the chloroplast. It carries out the reaction heme b + 3 reduced [NADPH--hemoprotein reductase] + 3 O2 = biliverdin IXalpha + CO + Fe(2+) + 3 oxidized [NADPH--hemoprotein reductase] + 3 H2O + H(+). Activated by ascorbate. Its function is as follows. Key enzyme in the synthesis of the chromophore of the phytochrome family of plant photoreceptors. Catalyzes the opening of the heme ring to form the open-chain tetrapyrrole biliverdin IX with the release of iron and carbon monoxide (CO). Produces specifically the biliverdin IX-alpha isomer. Can form complex with heme, is ferredoxin-dependent and its activity is increased in the presence of ascorbate. Plays a role in salt acclimation signaling. May affect the plastid-to-nucleus signaling pathway by perturbing tetrapyrrole synthesis. The plastid-to-nucleus signal plays an important role in the coordinated expression of both nuclear- and chloroplast-localized genes that encode photosynthesis-related proteins. In Arabidopsis thaliana (Mouse-ear cress), this protein is Heme oxygenase 1, chloroplastic (HO1).